Consider the following 108-residue polypeptide: Thiosulfate sulfurtransferase GlpE (108 aa).

Residues 18-106 form the Rhodanese domain; that stretch reads QNEDAVLVDI…WVRSELPIEL (89 aa). Cys-66 serves as the catalytic Cysteine persulfide intermediate.

This sequence belongs to the GlpE family.

The protein localises to the cytoplasm. The catalysed reaction is thiosulfate + hydrogen cyanide = thiocyanate + sulfite + 2 H(+). It carries out the reaction thiosulfate + [thioredoxin]-dithiol = [thioredoxin]-disulfide + hydrogen sulfide + sulfite + 2 H(+). Functionally, transferase that catalyzes the transfer of sulfur from thiosulfate to thiophilic acceptors such as cyanide or dithiols. May function in a CysM-independent thiosulfate assimilation pathway by catalyzing the conversion of thiosulfate to sulfite, which can then be used for L-cysteine biosynthesis. The protein is Thiosulfate sulfurtransferase GlpE of Glaesserella parasuis serovar 5 (strain SH0165) (Haemophilus parasuis).